Consider the following 183-residue polypeptide: Ras-like protein (183 aa).

Gly10–Ser17 contacts GTP. Residues Tyr32–Tyr40 carry the Effector region motif. GTP contacts are provided by residues Asp57 to Gln61 and Asn116 to Asp119.

This sequence belongs to the small GTPase superfamily. Ras family.

It is found in the cell membrane. The enzyme catalyses GTP + H2O = GDP + phosphate + H(+). Alternates between an inactive form bound to GDP and an active form bound to GTP. Activated by a guanine nucleotide-exchange factor (GEF) and inactivated by a GTPase-activating protein (GAP). Functionally, ras proteins bind GDP/GTP and possess intrinsic GTPase activity. The chain is Ras-like protein from Carassius auratus (Goldfish).